Here is a 201-residue protein sequence, read N- to C-terminus: Holliday junction branch migration complex subunit RuvA (201 aa).

A domain I region spans residues 1–63; that stretch reads MYDYIKGTVT…EDNISLFGFQ (63 aa). The segment at 64–142 is domain II; the sequence is TTEERYLFKK…DVVASEIVYV (79 aa). The tract at residues 143-153 is flexible linker; that stretch reads APENDMVAGLS. The domain III stretch occupies residues 153 to 201; the sequence is SPQLEEAVLALEALGYSTRELKKVIPKLAKEADLTSDAYIKLALQLMTK.

This sequence belongs to the RuvA family. In terms of assembly, homotetramer. Forms an RuvA(8)-RuvB(12)-Holliday junction (HJ) complex. HJ DNA is sandwiched between 2 RuvA tetramers; dsDNA enters through RuvA and exits via RuvB. An RuvB hexamer assembles on each DNA strand where it exits the tetramer. Each RuvB hexamer is contacted by two RuvA subunits (via domain III) on 2 adjacent RuvB subunits; this complex drives branch migration. In the full resolvosome a probable DNA-RuvA(4)-RuvB(12)-RuvC(2) complex forms which resolves the HJ.

It localises to the cytoplasm. Functionally, the RuvA-RuvB-RuvC complex processes Holliday junction (HJ) DNA during genetic recombination and DNA repair, while the RuvA-RuvB complex plays an important role in the rescue of blocked DNA replication forks via replication fork reversal (RFR). RuvA specifically binds to HJ cruciform DNA, conferring on it an open structure. The RuvB hexamer acts as an ATP-dependent pump, pulling dsDNA into and through the RuvAB complex. HJ branch migration allows RuvC to scan DNA until it finds its consensus sequence, where it cleaves and resolves the cruciform DNA. This is Holliday junction branch migration complex subunit RuvA from Listeria monocytogenes serovar 1/2a (strain ATCC BAA-679 / EGD-e).